The following is a 92-amino-acid chain: Small ribosomal subunit protein bS21 (92 aa).

The interval 37–92 is disordered; sequence QREGTFREMKRRNHYEKPSEKKARQKAEAIRRARKLARKRAQREGLIAKRGGTTRR. Positions 51-67 are enriched in basic and acidic residues; it reads YEKPSEKKARQKAEAIR. Basic residues predominate over residues 68–77; sequence RARKLARKRA.

It belongs to the bacterial ribosomal protein bS21 family.

The chain is Small ribosomal subunit protein bS21 from Maricaulis maris (strain MCS10) (Caulobacter maris).